The following is a 279-amino-acid chain: Movement protein (279 aa).

The interval 246-279 is disordered; that stretch reads SESEDLNVESPPAAIGSSSASRSEAFRPQVVNGL. Over residues 254–268 the composition is skewed to low complexity; sequence ESPPAAIGSSSASRS.

This sequence belongs to the cucumovirus movement protein family.

It is found in the host cell junction. The protein resides in the host plasmodesma. Transports viral genome to neighboring plant cells directly through plasmosdesmata, without any budding. The movement protein allows efficient cell to cell propagation, by bypassing the host cell wall barrier. Acts by forming a tubular structure at the host plasmodesmata, enlarging it enough to allow free passage of virion capsids. The sequence is that of Movement protein from Cucurbita pepo (Vegetable marrow).